A 545-amino-acid chain; its full sequence is MAELTISSDEIRSAIANYTSSYSPEASREEVGVVTTAADGIANVSGMPSVMANELLEFPGGVIGVAQNLDTDSVGVVVLGNYETLKEGDEVKRTGEVLSIPVGENFLGRVINPLGEPIDGLGDITDTEERALELQAPSVLMRQPVNEPMQTGIKAIDAMTPIGRGQRQLIIGDRKTGKTSVCIDTILNQRDNWESGDPSKQVRCIYVAIGQKGSTIASIRQTLEEHGALEYTTIVAAPASDSAGFKWLAPFAGAALGQHWMYQGKHVLVIYDDLTKQAEAYRAISLLLRRPPGREAYPGDVFYLHSRLLERAAKLNDELGGGSLTALPIIETKANDVSAFIPTNVISITDGQVFLESDLFNQGVRPAINVGVSVSRVGGDAQTKGMKKVSGNLRLDLAAYRDLEAFSAFASDLDDASKAQLERGERLVELLKQTEHAPQSVEHQMISIWLAGEGEFDDVPVEDVRRFEAELIEHLRSNASGVFDQIAGGTPFTEESQAQLKQSTSEFKRGFQTTDGTPIIREPEARAMEQDEVKQSEITVTRKTV.

Residue 172-179 (GDRKTGKT) coordinates ATP.

Belongs to the ATPase alpha/beta chains family. F-type ATPases have 2 components, CF(1) - the catalytic core - and CF(0) - the membrane proton channel. CF(1) has five subunits: alpha(3), beta(3), gamma(1), delta(1), epsilon(1). CF(0) has three main subunits: a(1), b(2) and c(9-12). The alpha and beta chains form an alternating ring which encloses part of the gamma chain. CF(1) is attached to CF(0) by a central stalk formed by the gamma and epsilon chains, while a peripheral stalk is formed by the delta and b chains.

Its subcellular location is the cell membrane. The enzyme catalyses ATP + H2O + 4 H(+)(in) = ADP + phosphate + 5 H(+)(out). Produces ATP from ADP in the presence of a proton gradient across the membrane. The alpha chain is a regulatory subunit. This Corynebacterium urealyticum (strain ATCC 43042 / DSM 7109) protein is ATP synthase subunit alpha.